Consider the following 169-residue polypeptide: uncharacterized protein (169 aa).

In terms of domain architecture, HTH asnC-type spans 18 to 79; that stretch reads LDRADVALLN…IVSPKAVGRP (62 aa). The segment at residues 37-56 is a DNA-binding region (H-T-H motif); the sequence is SEELADKVGLSPTACQRRLK.

This is an uncharacterized protein from Sinorhizobium fredii (strain NBRC 101917 / NGR234).